A 336-amino-acid polypeptide reads, in one-letter code: Anthranilate phosphoribosyltransferase (336 aa).

5-phospho-alpha-D-ribose 1-diphosphate is bound by residues G82, G85–D86, T90, N92–T95, K110–S118, and S122. G82 serves as a coordination point for anthranilate. S94 is a Mg(2+) binding site. N113 is an anthranilate binding site. R168 contacts anthranilate. 2 residues coordinate Mg(2+): D227 and E228.

Belongs to the anthranilate phosphoribosyltransferase family. As to quaternary structure, homodimer. It depends on Mg(2+) as a cofactor.

It carries out the reaction N-(5-phospho-beta-D-ribosyl)anthranilate + diphosphate = 5-phospho-alpha-D-ribose 1-diphosphate + anthranilate. It participates in amino-acid biosynthesis; L-tryptophan biosynthesis; L-tryptophan from chorismate: step 2/5. Its function is as follows. Catalyzes the transfer of the phosphoribosyl group of 5-phosphorylribose-1-pyrophosphate (PRPP) to anthranilate to yield N-(5'-phosphoribosyl)-anthranilate (PRA). The sequence is that of Anthranilate phosphoribosyltransferase from Leptospira interrogans serogroup Icterohaemorrhagiae serovar copenhageni (strain Fiocruz L1-130).